The chain runs to 236 residues: MIDMDEKLRILLCEDDENLGMLLREYLQAKGYSAELYPDGEAGFKAFLKNKYDLCVFDVMMPKKDGFTLAQEVRAANAEIPIIFLTAKTLKEDILEGFKIGADDYITKPFSMEELTFRIEAILRRVRGKKNKESNVYKIGKFTFDTQKQILAIGDKQTKLTTKESELLGLLCAHANEILQRDFALKTIWIDDNYFNARSMDVYITKLRKHLKDDDSIEIINIHGKGYKLITPEPES.

One can recognise a Response regulatory domain in the interval 9-123 (RILLCEDDEN…ELTFRIEAIL (115 aa)). At Asp58 the chain carries 4-aspartylphosphate. The ompR/PhoB-type DNA-binding region spans 134–231 (SNVYKIGKFT…IHGKGYKLIT (98 aa)).

Phosphorylated by RprX.

It localises to the cytoplasm. Member of the two-component regulatory system RprX/RprY. This Bacteroides fragilis (strain YCH46) protein is Transcriptional regulatory protein RprY (rprY).